A 380-amino-acid chain; its full sequence is S-adenosylmethionine:tRNA ribosyltransferase-isomerase (380 aa).

The span at 1 to 15 (MHSKHPTDTARRCET) shows a compositional bias: basic and acidic residues. Positions 1-24 (MHSKHPTDTARRCETGTDSSDTAA) are disordered.

It belongs to the QueA family. Monomer.

Its subcellular location is the cytoplasm. It carries out the reaction 7-aminomethyl-7-carbaguanosine(34) in tRNA + S-adenosyl-L-methionine = epoxyqueuosine(34) in tRNA + adenine + L-methionine + 2 H(+). The protein operates within tRNA modification; tRNA-queuosine biosynthesis. In terms of biological role, transfers and isomerizes the ribose moiety from AdoMet to the 7-aminomethyl group of 7-deazaguanine (preQ1-tRNA) to give epoxyqueuosine (oQ-tRNA). This Oleidesulfovibrio alaskensis (strain ATCC BAA-1058 / DSM 17464 / G20) (Desulfovibrio alaskensis) protein is S-adenosylmethionine:tRNA ribosyltransferase-isomerase.